A 475-amino-acid polypeptide reads, in one-letter code: Ribulose bisphosphate carboxylase large chain (475 aa).

Residues 1–2 constitute a propeptide that is removed on maturation; sequence MS. Pro3 bears the N-acetylproline mark. N6,N6,N6-trimethyllysine is present on Lys14. Residues Asn123 and Thr173 each coordinate substrate. Catalysis depends on Lys175, which acts as the Proton acceptor. Lys177 is a substrate binding site. Mg(2+) is bound by residues Lys201, Asp203, and Glu204. Lys201 is modified (N6-carboxylysine). The active-site Proton acceptor is the His294. Substrate-binding residues include Arg295, His327, and Ser379.

This sequence belongs to the RuBisCO large chain family. Type I subfamily. As to quaternary structure, heterohexadecamer of 8 large chains and 8 small chains. The cofactor is Mg(2+).

The protein resides in the plastid. The catalysed reaction is 2 (2R)-3-phosphoglycerate + 2 H(+) = D-ribulose 1,5-bisphosphate + CO2 + H2O. The enzyme catalyses D-ribulose 1,5-bisphosphate + O2 = 2-phosphoglycolate + (2R)-3-phosphoglycerate + 2 H(+). Functionally, ruBisCO catalyzes two reactions: the carboxylation of D-ribulose 1,5-bisphosphate, the primary event in carbon dioxide fixation, as well as the oxidative fragmentation of the pentose substrate in the photorespiration process. Both reactions occur simultaneously and in competition at the same active site. The sequence is that of Ribulose bisphosphate carboxylase large chain from Aneura mirabilis (Parasitic liverwort).